The chain runs to 283 residues: Adenosyl-chloride synthase (283 aa).

Residues aspartate 11, 70–72 (YVY), and 128–131 (TWYG) each bind substrate. A chloride-binding site is contributed by glycine 131.

It belongs to the SAM hydrolase / SAM-dependent halogenase family. In terms of assembly, homotrimer.

It carries out the reaction chloride + S-adenosyl-L-methionine = 5'-chloro-5'-deoxyadenosine + L-methionine. Its function is as follows. Involved in the biosynthesis of the proteosome inhibitor salinosporamide A (SalA). Catalyzes the halogenation of S-adenosyl-L-methionine (SAM) with chloride to generate 5'-chloro-5'-deoxyadenosine (5'-CIDA) and L-methionine. It can also use bromide and iodide, producing halogenated 5'-deoxyadenosine (5'-XDA) and L-methionine, however no halogenase activity is detected in the presence of fluoride. In Salinispora tropica (strain ATCC BAA-916 / DSM 44818 / JCM 13857 / NBRC 105044 / CNB-440), this protein is Adenosyl-chloride synthase.